The sequence spans 270 residues: Mediator of RNA polymerase II transcription subunit 4 (270 aa).

Residues 1–22 (MAASSSGEKEKERMGGVSGMTG) form a disordered region. Ala2 carries the N-acetylalanine modification. A coiled-coil region spans residues 26–131 (TRERLLSALE…ATAVYQAKEK (106 aa)). Position 32 is a phosphoserine (Ser32). The segment at 227–270 (MSVNMLPPNHSTDFLLEPPGHNKENEDDVEVMSTDSSSSSSDSD) is disordered. The span at 259–270 (STDSSSSSSDSD) shows a compositional bias: low complexity.

This sequence belongs to the Mediator complex subunit 4 family. As to quaternary structure, component of the Mediator complex, which is composed of MED1, MED4, MED6, MED7, MED8, MED9, MED10, MED11, MED12, MED13, MED13L, MED14, MED15, MED16, MED17, MED18, MED19, MED20, MED21, MED22, MED23, MED24, MED25, MED26, MED27, MED29, MED30, MED31, CCNC, CDK8 and CDC2L6/CDK11. The MED12, MED13, CCNC and CDK8 subunits form a distinct module termed the CDK8 module. Mediator containing the CDK8 module is less active than Mediator lacking this module in supporting transcriptional activation. Individual preparations of the Mediator complex lacking one or more distinct subunits have been variously termed ARC, CRSP, DRIP, PC2, SMCC and TRAP.

Its subcellular location is the nucleus. Component of the Mediator complex, a coactivator involved in the regulated transcription of nearly all RNA polymerase II-dependent genes. Mediator functions as a bridge to convey information from gene-specific regulatory proteins to the basal RNA polymerase II transcription machinery. Mediator is recruited to promoters by direct interactions with regulatory proteins and serves as a scaffold for the assembly of a functional preinitiation complex with RNA polymerase II and the general transcription factors. The protein is Mediator of RNA polymerase II transcription subunit 4 (Med4) of Rattus norvegicus (Rat).